A 631-amino-acid chain; its full sequence is 1-deoxy-D-xylulose-5-phosphate synthase (631 aa).

Residues His73 and 114–116 (SHA) each bind thiamine diphosphate. A Mg(2+)-binding site is contributed by Asp145. Thiamine diphosphate contacts are provided by residues 146–147 (GA), Asn175, Tyr286, and Glu368. Asn175 serves as a coordination point for Mg(2+).

This sequence belongs to the transketolase family. DXPS subfamily. As to quaternary structure, homodimer. The cofactor is Mg(2+). Thiamine diphosphate is required as a cofactor.

It carries out the reaction D-glyceraldehyde 3-phosphate + pyruvate + H(+) = 1-deoxy-D-xylulose 5-phosphate + CO2. It participates in metabolic intermediate biosynthesis; 1-deoxy-D-xylulose 5-phosphate biosynthesis; 1-deoxy-D-xylulose 5-phosphate from D-glyceraldehyde 3-phosphate and pyruvate: step 1/1. In terms of biological role, catalyzes the acyloin condensation reaction between C atoms 2 and 3 of pyruvate and glyceraldehyde 3-phosphate to yield 1-deoxy-D-xylulose-5-phosphate (DXP). The chain is 1-deoxy-D-xylulose-5-phosphate synthase from Nocardia farcinica (strain IFM 10152).